Consider the following 874-residue polypeptide: Eukaryotic translation initiation factor 3 subunit C (874 aa).

A disordered region spans residues 1–70; it reads MSRFFVSGYT…DGRPSGPAYF (70 aa). Residues 14 to 61 are compositionally biased toward acidic residues; it reads SSEEEDLLSTSEEELLSSSDEGEDNESDSSFFGEDDDESEESSSDDED. In terms of domain architecture, PCI spans 598-774; that stretch reads FHQHINLELL…KFISFTSTTE (177 aa). The interval 797–874 is disordered; the sequence is KNEKTQSNGY…SNNDEFQATA (78 aa). Low complexity predominate over residues 813–848; that stretch reads KDQQNQQQQNQNQNQQQQQNQQQQQQQQSSQQQSNN. A compositionally biased stretch (polar residues) spans 862–874; that stretch reads NVNSNNDEFQATA.

Belongs to the eIF-3 subunit C family. As to quaternary structure, component of the eukaryotic translation initiation factor 3 (eIF-3) complex.

Its subcellular location is the cytoplasm. Functionally, component of the eukaryotic translation initiation factor 3 (eIF-3) complex, which is involved in protein synthesis of a specialized repertoire of mRNAs and, together with other initiation factors, stimulates binding of mRNA and methionyl-tRNAi to the 40S ribosome. The eIF-3 complex specifically targets and initiates translation of a subset of mRNAs involved in cell proliferation. The chain is Eukaryotic translation initiation factor 3 subunit C from Candida albicans (strain SC5314 / ATCC MYA-2876) (Yeast).